The following is a 613-amino-acid chain: Autophagy-related protein 22-2 (613 aa).

The segment at 1 to 30 is disordered; it reads MAFNSTPPVSPGGEAQQRPPRFPGEDTTPT. The chain crosses the membrane as a helical span at residues 41–61; that stretch reads YGIAAEVFAVCGVGSFLPLTL. Asn-90 carries an N-linked (GlcNAc...) asparagine glycan. A run of 7 helical transmembrane segments spans residues 120–140, 167–187, 189–209, 278–298, 307–327, 382–402, and 418–438; these read SFAM…LISF, LFIF…VVGV, CLGS…ANDP, VGLG…MLFA, ISGT…WFSF, VIIF…VSGT, and VGLL…LWPV. Asn-448 carries an N-linked (GlcNAc...) asparagine glycan. 4 helical membrane passes run 453–473, 477–497, 508–528, and 553–573; these read LCIA…IPLF, GVVG…HGLV, FFGL…YAAT, and GFFF…MVNA. The interval 592–613 is disordered; it reads REHASEYGGPSEEAEGLLARDI.

It belongs to the ATG22 family.

Its subcellular location is the vacuole membrane. Functionally, vacuolar effluxer which mediate the efflux of amino acids resulting from autophagic degradation. The release of autophagic amino acids allows the maintenance of protein synthesis and viability during nitrogen starvation. This Aspergillus fumigatus (strain ATCC MYA-4609 / CBS 101355 / FGSC A1100 / Af293) (Neosartorya fumigata) protein is Autophagy-related protein 22-2 (atg22-2).